Here is a 213-residue protein sequence, read N- to C-terminus: uncharacterized protein (213 aa).

An N-terminal signal peptide occupies residues 1–21 (MKKILFLTVICFCLSSIKAYA).

This is an uncharacterized protein from Rickettsia prowazekii (strain Madrid E).